The primary structure comprises 254 residues: Adenosylcobinamide-GDP ribazoletransferase (254 aa).

7 helical membrane passes run 27–47 (SSLYWFPVVGLVIGGIVVLLA), 50–70 (GMGVGWPELAAVLALLGGLIL), 104–124 (VGSFGSLALIGVMLFKWICLL), 131–151 (AYGMIAAGAVLSRTAQVLLAA), 170–190 (AGWPHLLVASISGVVLLFVLL), 194–214 (LAPSLILLFGSVVALFFVGWL), and 233–253 (LVEAAVWLLAALWLKGLFWAI).

It belongs to the CobS family. It depends on Mg(2+) as a cofactor.

The protein resides in the cell inner membrane. The catalysed reaction is alpha-ribazole + adenosylcob(III)inamide-GDP = adenosylcob(III)alamin + GMP + H(+). The enzyme catalyses alpha-ribazole 5'-phosphate + adenosylcob(III)inamide-GDP = adenosylcob(III)alamin 5'-phosphate + GMP + H(+). It functions in the pathway cofactor biosynthesis; adenosylcobalamin biosynthesis; adenosylcobalamin from cob(II)yrinate a,c-diamide: step 7/7. Its function is as follows. Joins adenosylcobinamide-GDP and alpha-ribazole to generate adenosylcobalamin (Ado-cobalamin). Also synthesizes adenosylcobalamin 5'-phosphate from adenosylcobinamide-GDP and alpha-ribazole 5'-phosphate. The chain is Adenosylcobinamide-GDP ribazoletransferase from Chlorobaculum tepidum (strain ATCC 49652 / DSM 12025 / NBRC 103806 / TLS) (Chlorobium tepidum).